A 448-amino-acid chain; its full sequence is tRNA(Ile)-lysidine synthase (448 aa).

Ser25–Ser30 is a binding site for ATP.

Belongs to the tRNA(Ile)-lysidine synthase family.

The protein resides in the cytoplasm. It catalyses the reaction cytidine(34) in tRNA(Ile2) + L-lysine + ATP = lysidine(34) in tRNA(Ile2) + AMP + diphosphate + H(+). Ligates lysine onto the cytidine present at position 34 of the AUA codon-specific tRNA(Ile) that contains the anticodon CAU, in an ATP-dependent manner. Cytidine is converted to lysidine, thus changing the amino acid specificity of the tRNA from methionine to isoleucine. The polypeptide is tRNA(Ile)-lysidine synthase (Brucella suis biovar 1 (strain 1330)).